The following is a 287-amino-acid chain: Ribosomal RNA small subunit methyltransferase A (287 aa).

Positions 35, 37, 62, 83, 113, and 131 each coordinate S-adenosyl-L-methionine.

The protein belongs to the class I-like SAM-binding methyltransferase superfamily. rRNA adenine N(6)-methyltransferase family. RsmA subfamily.

Its subcellular location is the cytoplasm. The enzyme catalyses adenosine(1518)/adenosine(1519) in 16S rRNA + 4 S-adenosyl-L-methionine = N(6)-dimethyladenosine(1518)/N(6)-dimethyladenosine(1519) in 16S rRNA + 4 S-adenosyl-L-homocysteine + 4 H(+). Its function is as follows. Specifically dimethylates two adjacent adenosines (A1518 and A1519) in the loop of a conserved hairpin near the 3'-end of 16S rRNA in the 30S particle. May play a critical role in biogenesis of 30S subunits. The polypeptide is Ribosomal RNA small subunit methyltransferase A (Thermobifida fusca (strain YX)).